The sequence spans 353 residues: Guanine nucleotide-binding protein alpha-1 subunit (353 aa).

The interval 1 to 26 (MGCGMSTEEKEGKARNEEIENQLKRD) is disordered. Gly2 carries the N-myristoyl glycine lipid modification. Residue Cys3 is the site of S-palmitoyl cysteine attachment. Positions 7 to 26 (TEEKEGKARNEEIENQLKRD) are enriched in basic and acidic residues. The G-alpha domain maps to 32-353 (NEIKMLLLGA…QENLRLCGLI (322 aa)). Residues 35–48 (KMLLLGAGESGKST) form a G1 motif region. Positions 43, 44, 45, 46, 47, 48, 150, 175, 181, 203, 269, 270, 272, and 325 each coordinate GTP. Ser47 provides a ligand contact to Mg(2+). The tract at residues 173–181 (DVLRSRVKT) is G2 motif. Thr181 contacts Mg(2+). Residues 196 to 205 (YRMFDVGGQR) form a G3 motif region. Residues 265 to 272 (ILFLNKID) form a G4 motif region. Positions 323–328 (TCATDT) are G5 motif.

The protein belongs to the G-alpha family. G(q) subfamily. G proteins are composed of 3 units; alpha, beta and gamma. The alpha chain contains the guanine nucleotide binding site. It depends on Mg(2+) as a cofactor.

Its function is as follows. Guanine nucleotide-binding proteins (G proteins) are involved as modulators or transducers in various transmembrane signaling systems. The polypeptide is Guanine nucleotide-binding protein alpha-1 subunit (gna-1) (Neurospora crassa (strain ATCC 24698 / 74-OR23-1A / CBS 708.71 / DSM 1257 / FGSC 987)).